Consider the following 283-residue polypeptide: MSESNSVSVQQMLDRSCWVCFATDEDDRTAEWVRPCRCRGSTKWVHQACLQRWVDEKQRGNSTARVACPQCNAEYLIVFPNLGPVVYVLDLADRLISKACPFAAAGIMVGSIYWTAVTYGAVTVMQVVGHKEGLDVMERADPLFLLIGLPTIPVVLILGKMIRWEDYVLRLWRKYSNKLQILNSIFPGIGCPVPRVPAEANPLADHVSATRILCGALVFPTIATIVGKLMFSTVNSNLQRTILGGIAFVAIKGAFKVYFKQQQYLRQAHRKILDSQEPEPEEV.

The RING-CH-type zinc finger occupies 9-78 (VQQMLDRSCW…PQCNAEYLIV (70 aa)). The Zn(2+) site is built by Cys-17, Cys-20, Cys-36, Cys-38, His-46, Cys-49, Cys-68, and Cys-71. Transmembrane regions (helical) follow at residues 102–122 (FAAA…YGAV), 142–162 (PLFL…GKMI), 212–232 (ILCG…LMFS), and 241–261 (TILG…YFKQ).

The protein localises to the mitochondrion outer membrane. The protein resides in the endoplasmic reticulum membrane. The catalysed reaction is S-ubiquitinyl-[E2 ubiquitin-conjugating enzyme]-L-cysteine + [acceptor protein]-L-lysine = [E2 ubiquitin-conjugating enzyme]-L-cysteine + N(6)-ubiquitinyl-[acceptor protein]-L-lysine.. It functions in the pathway protein modification; protein ubiquitination. In terms of biological role, mitochondrial E3 ubiquitin-protein ligase that plays a crucial role in the control of mitochondrial morphology by acting as a positive regulator of mitochondrial fission. May play a role in the prevention of cell senescence acting as a regulator of mitochondrial quality control. In Xenopus laevis (African clawed frog), this protein is E3 ubiquitin-protein ligase MARCHF5 (marchf5).